Consider the following 443-residue polypeptide: MREIVHIQGGQCGNQIGAKFWEVVSDEHGVDPTGTYHGDSDLQLERINVYFNEATGGRYVPRAILMDLEPGTMDSVRSGPYGQIFRPDNFVFGQTGAGNNWAKGHYTEGAELIDSVLDVVRKEAESCDCLQGFQVCHSLGGGTGSGMGTLLISKIREEYPDRMMLTFSVVPSPKVSDTVVEPYNATLSVHQLVENADECMVLDNEALYDICFRTLKLTTPTFGDLNHLISAVMSGITCCLRFPGQLNADLRKLAVNLIPFPRLHFFMVGFTPLTSRGSQQYRALTVPELTQQMWDAKNMMCAADPRHGRYLTASALFRGRMSTKEVDEQMLNVQNKNSSYFVEWIPNNVKSSVCDIPPKGLKMSATFIGNSTAIQEMFKRVSEQFTAMFRRKAFLHWYTGEGMDEMEFTEAESNMNDLVSEYQQYQDASAEEEGEFEGEEEEA.

Positions 11, 69, 138, 142, 143, 144, 204, and 226 each coordinate GTP. Glu-69 provides a ligand contact to Mg(2+). The segment at 424–443 is disordered; that stretch reads QYQDASAEEEGEFEGEEEEA. The segment covering 429–443 has biased composition (acidic residues); it reads SAEEEGEFEGEEEEA.

Belongs to the tubulin family. In terms of assembly, dimer of alpha and beta chains. A typical microtubule is a hollow water-filled tube with an outer diameter of 25 nm and an inner diameter of 15 nM. Alpha-beta heterodimers associate head-to-tail to form protofilaments running lengthwise along the microtubule wall with the beta-tubulin subunit facing the microtubule plus end conferring a structural polarity. Microtubules usually have 13 protofilaments but different protofilament numbers can be found in some organisms and specialized cells. The cofactor is Mg(2+).

The protein resides in the cytoplasm. Its subcellular location is the cytoskeleton. Its function is as follows. Tubulin is the major constituent of microtubules, a cylinder consisting of laterally associated linear protofilaments composed of alpha- and beta-tubulin heterodimers. Microtubules grow by the addition of GTP-tubulin dimers to the microtubule end, where a stabilizing cap forms. Below the cap, tubulin dimers are in GDP-bound state, owing to GTPase activity of alpha-tubulin. This is Tubulin beta chain (TUBB) from Chlamydomonas incerta.